A 196-amino-acid chain; its full sequence is GTP cyclohydrolase 1 (196 aa).

Positions 85, 88, and 156 each coordinate Zn(2+).

It belongs to the GTP cyclohydrolase I family. Toroid-shaped homodecamer, composed of two pentamers of five dimers.

The enzyme catalyses GTP + H2O = 7,8-dihydroneopterin 3'-triphosphate + formate + H(+). Its pathway is cofactor biosynthesis; 7,8-dihydroneopterin triphosphate biosynthesis; 7,8-dihydroneopterin triphosphate from GTP: step 1/1. The polypeptide is GTP cyclohydrolase 1 (Bacteroides thetaiotaomicron (strain ATCC 29148 / DSM 2079 / JCM 5827 / CCUG 10774 / NCTC 10582 / VPI-5482 / E50)).